The primary structure comprises 866 residues: MPAVSLPPKENALFKRILRCYEHKQYRNGLKFCKQILSNPKFAEHGETLAMKGLTLNCLGKKEEAYELVRRGLRNDLKSHVCWHVYGLLQRSDKKYDEAIKCYRNALKWDKDNLQILRDLSLLQIQMRDLEGYRETRYQLLQLRPAQRASWIGYAIAYHLLEDYEMAAKILEEFRKTQQTSPDKVDYEYSELLLYQNQVLREAGLYREALEHLCTYEKQICDKLAVEETKGELLLQLCRLEDAADVYRGLQERNPENWAYYKGLEKALKPANMLERLKIYEEAWTKYPRGLVPRRLPLNFLSGEKFKECLDKFLRMNFSKGCPPVFNTLRSLYKDKEKVAIIEELVVGYETSLKSCRLFNPNDDGKEEPPTTLLWVQYYLAQHYDKIGQPSIALEYINTAIESTPTLIELFLVKAKIYKHAGNIKEAARWMDEAQALDTADRFINSKCAKYMLKANLIKEAEEMCSKFTREGTSAVENLNEMQCMWFQTECAQAYKAMNKFGEALKKCHEIERHFIEITDDQFDFHTYCMRKITLRSYVDLLKLEDVLRQHPFYFKAARIAIEIYLKLHDNPLTDENKEHEADTANMSDKELKKLRNKQRRAQKKAQIEEEKKNAEKEKQQRNQKKKKDDDDEEIGGPKEELIPEKLAKVETPLEEAIKFLTPLKNLVKNKIETHLFAFEIYFRKEKFLLMLQSVKRAFAIDSSHPWLHECMIRLFNTAVCESKDLSDTVRTVLKQEMNRLFGATNPKNFNETFLKRNSDSLPHRLSAAKMVYYLDPSSQKRAIELATTLDESLTNRNLQTCMEVLEALYDGSLGDCKEAAEIYRANCHKLFPYALAFMPPGYEEDMKITVNGDSSAEAEELANEI.

TPR repeat units follow at residues 46–79 (GETLAMKGLTLNCLGKKEEAYELVRRGLRNDLKS), 80–113 (HVCWHVYGLLQRSDKKYDEAIKCYRNALKWDKDN), 148–184 (RASWIGYAIAYHLLEDYEMAAKILEEFRKTQQTSPDK), and 224–257 (LAVEETKGELLLQLCRLEDAADVYRGLQERNPEN). K262 carries the N6-acetyllysine modification. A Phosphoserine modification is found at S302. 3 TPR repeats span residues 374–407 (LWVQYYLAQHYDKIGQPSIALEYINTAIESTPTL), 409–441 (ELFLVKAKIYKHAGNIKEAARWMDEAQALDTAD), and 485–518 (MWFQTECAQAYKAMNKFGEALKKCHEIERHFIEI). An interaction with HYPK region spans residues 500-866 (KFGEALKKCH…AEAEELANEI (367 aa)). 2 positions are modified to phosphoserine: S537 and S588. Residues 579–594 (EHEADTANMSDKELKK) show a composition bias toward basic and acidic residues. The interval 579–642 (EHEADTANMS…EEIGGPKEEL (64 aa)) is disordered. The segment covering 595 to 604 (LRNKQRRAQK) has biased composition (basic residues). Residues 606 to 621 (AQIEEEKKNAEKEKQQ) are compositionally biased toward basic and acidic residues. The Bipartite nuclear localization signal motif lies at 612–629 (KKNAEKEKQQRNQKKKKD). A TPR 8 repeat occupies 672-705 (IETHLFAFEIYFRKEKFLLMLQSVKRAFAIDSSH). Residues K735 and K756 each carry the N6-acetyllysine modification. S855 and S856 each carry phosphoserine.

Component of the N-terminal acetyltransferase A complex (also called the NatA complex) composed of NAA10 and NAA15. Within the complex interacts with NAA10. Component of the N-terminal acetyltransferase A (NatA)/HYPK complex at least composed of NAA10, NAA15 and HYPK, which has N-terminal acetyltransferase activity. In complex with NAA10, interacts with HYPK. Component of the N-terminal acetyltransferase E (NatE) complex at least composed of NAA10, NAA15 and NAA50. Within the complex interacts with NAA10; the interaction is required for binding to NAA50. Interacts with NAAT50. The interaction of the NatA complex with NAA50 reduces the acetylation activity of the NatA complex. Component of the N-terminal acetyltransferase E (NatE)/HYPK complex at least composed of NAA10, NAA15, NAA50 and HYPK. In complex with NAA10 interacts with HYPK; the interaction with HYPK reduces the capacity of the NatA complex to interact with NAA50. Interacts with NAA11. Interacts with XRCC6 and XRCC5. Post-translationally, cleaved by caspases during apoptosis, resulting in a stable 35 kDa fragment. Expressed at high levels in testis and in ocular endothelial cells. Also found in brain (corpus callosum), heart, colon, bone marrow and at lower levels in most adult tissues, including thyroid, liver, pancreas, mammary and salivary glands, lung, ovary, urogenital system and upper gastrointestinal tract. Overexpressed in gastric cancer, in papillary thyroid carcinomas and in a Burkitt lymphoma cell line (Daudi). Specifically suppressed in abnormal proliferating blood vessels in eyes of patients with proliferative diabetic retinopathy.

It is found in the cytoplasm. Its subcellular location is the nucleus. In terms of biological role, auxillary subunit of N-terminal acetyltransferase complexes which display alpha (N-terminal) acetyltransferase (NAT) activity. The NAT activity may be important for vascular, hematopoietic and neuronal growth and development. Required to control retinal neovascularization in adult ocular endothelial cells. In complex with XRCC6 and XRCC5 (Ku80), up-regulates transcription from the osteocalcin promoter. This chain is N-alpha-acetyltransferase 15, NatA auxiliary subunit (NAA15), found in Homo sapiens (Human).